The following is a 204-amino-acid chain: Thiamine-phosphate synthase (204 aa).

4-amino-2-methyl-5-(diphosphooxymethyl)pyrimidine contacts are provided by residues 34–38 (QYRDK) and Asp-66. The Mg(2+) site is built by Asp-67 and Asp-86. Residue Ser-104 coordinates 4-amino-2-methyl-5-(diphosphooxymethyl)pyrimidine. 131–133 (TST) contributes to the 2-[(2R,5Z)-2-carboxy-4-methylthiazol-5(2H)-ylidene]ethyl phosphate binding site. Position 134 (Lys-134) interacts with 4-amino-2-methyl-5-(diphosphooxymethyl)pyrimidine. 2-[(2R,5Z)-2-carboxy-4-methylthiazol-5(2H)-ylidene]ethyl phosphate is bound by residues Gly-160 and 180 to 181 (VS).

The protein belongs to the thiamine-phosphate synthase family. It depends on Mg(2+) as a cofactor.

It carries out the reaction 2-[(2R,5Z)-2-carboxy-4-methylthiazol-5(2H)-ylidene]ethyl phosphate + 4-amino-2-methyl-5-(diphosphooxymethyl)pyrimidine + 2 H(+) = thiamine phosphate + CO2 + diphosphate. It catalyses the reaction 2-(2-carboxy-4-methylthiazol-5-yl)ethyl phosphate + 4-amino-2-methyl-5-(diphosphooxymethyl)pyrimidine + 2 H(+) = thiamine phosphate + CO2 + diphosphate. The catalysed reaction is 4-methyl-5-(2-phosphooxyethyl)-thiazole + 4-amino-2-methyl-5-(diphosphooxymethyl)pyrimidine + H(+) = thiamine phosphate + diphosphate. It functions in the pathway cofactor biosynthesis; thiamine diphosphate biosynthesis; thiamine phosphate from 4-amino-2-methyl-5-diphosphomethylpyrimidine and 4-methyl-5-(2-phosphoethyl)-thiazole: step 1/1. Functionally, condenses 4-methyl-5-(beta-hydroxyethyl)thiazole monophosphate (THZ-P) and 2-methyl-4-amino-5-hydroxymethyl pyrimidine pyrophosphate (HMP-PP) to form thiamine monophosphate (TMP). The polypeptide is Thiamine-phosphate synthase (Picrophilus torridus (strain ATCC 700027 / DSM 9790 / JCM 10055 / NBRC 100828 / KAW 2/3)).